The following is a 247-amino-acid chain: E3 SUMO-protein ligase NSE2 (247 aa).

M1 carries the post-translational modification N-acetylmethionine. Glycyl lysine isopeptide (Lys-Gly) (interchain with G-Cter in SUMO2) cross-links involve residues K90 and K107. S116 carries the phosphoserine modification. Residues K125 and K130 each participate in a glycyl lysine isopeptide (Lys-Gly) (interchain with G-Cter in SUMO2) cross-link. The segment at 154–240 (VDEDMIVTQS…LRRAIESHNK (87 aa)) adopts an SP-RING-type zinc-finger fold. Residues C185, H187, C210, and C215 each contribute to the Zn(2+) site.

Belongs to the NSE2 family. Component of the SMC5-SMC6 complex which consists at least of SMC5, SMC6, NSMCE2, NSMCE1, NSMCE4A or EID3 and NSMCE3. Post-translationally, sumoylated, possibly via autosumoylation.

The protein localises to the nucleus. It is found in the chromosome. It localises to the telomere. The protein resides in the PML body. It functions in the pathway protein modification; protein sumoylation. Its function is as follows. E3 SUMO-protein ligase component of the SMC5-SMC6 complex, a complex involved in DNA double-strand break repair by homologous recombination. Is not be required for the stability of the complex. The complex may promote sister chromatid homologous recombination by recruiting the SMC1-SMC3 cohesin complex to double-strand breaks. Acts as an E3 ligase mediating SUMO attachment to various proteins such as SMC6L1 and TSNAX, the shelterin complex subunits TERF1, TERF2, TINF2 and TERF2IP, RAD51AP1, and maybe the cohesin components RAD21 and STAG2. Required for recruitment of telomeres to PML nuclear bodies. Required for sister chromatid cohesion during prometaphase and mitotic progression. The chain is E3 SUMO-protein ligase NSE2 (Nsmce2) from Mus musculus (Mouse).